The primary structure comprises 429 residues: Trigger factor (429 aa).

The PPIase FKBP-type domain occupies 161-246 (GDRLSIDFKG…INEIASPKEL (86 aa)).

It belongs to the FKBP-type PPIase family. Tig subfamily.

It localises to the cytoplasm. The enzyme catalyses [protein]-peptidylproline (omega=180) = [protein]-peptidylproline (omega=0). Involved in protein export. Acts as a chaperone by maintaining the newly synthesized protein in an open conformation. Functions as a peptidyl-prolyl cis-trans isomerase. In Vesicomyosocius okutanii subsp. Calyptogena okutanii (strain HA), this protein is Trigger factor.